Here is a 113-residue protein sequence, read N- to C-terminus: Cell division topological specificity factor (113 aa).

Belongs to the MinE family.

Prevents the cell division inhibition by proteins MinC and MinD at internal division sites while permitting inhibition at polar sites. This ensures cell division at the proper site by restricting the formation of a division septum at the midpoint of the long axis of the cell. The sequence is that of Cell division topological specificity factor from Methylobacterium radiotolerans (strain ATCC 27329 / DSM 1819 / JCM 2831 / NBRC 15690 / NCIMB 10815 / 0-1).